Consider the following 142-residue polypeptide: Large ribosomal subunit protein uL16 (142 aa).

The protein belongs to the universal ribosomal protein uL16 family. In terms of assembly, part of the 50S ribosomal subunit.

Functionally, binds 23S rRNA and is also seen to make contacts with the A and possibly P site tRNAs. The polypeptide is Large ribosomal subunit protein uL16 (Phenylobacterium zucineum (strain HLK1)).